Reading from the N-terminus, the 377-residue chain is tRNA-specific 2-thiouridylase MnmA (377 aa).

ATP-binding positions include 9 to 16 (AMSGGVDS) and leucine 35. Catalysis depends on cysteine 105, which acts as the Nucleophile. Cysteine 105 and cysteine 201 are joined by a disulfide. Glycine 129 is a binding site for ATP. An interaction with tRNA region spans residues 151 to 153 (KNQ). Catalysis depends on cysteine 201, which acts as the Cysteine persulfide intermediate. The tract at residues 307–308 (RY) is interaction with tRNA.

The protein belongs to the MnmA/TRMU family.

Its subcellular location is the cytoplasm. It catalyses the reaction S-sulfanyl-L-cysteinyl-[protein] + uridine(34) in tRNA + AH2 + ATP = 2-thiouridine(34) in tRNA + L-cysteinyl-[protein] + A + AMP + diphosphate + H(+). Catalyzes the 2-thiolation of uridine at the wobble position (U34) of tRNA, leading to the formation of s(2)U34. The sequence is that of tRNA-specific 2-thiouridylase MnmA from Leptospira borgpetersenii serovar Hardjo-bovis (strain JB197).